The sequence spans 293 residues: Undecaprenyl-diphosphatase (293 aa).

Helical transmembrane passes span 74-94 (VLVF…AGVF), 107-127 (WMII…KDLI), 134-154 (MWIT…AEKM), 209-229 (FLLA…DAFA), 243-263 (VGTL…MKFV), and 271-291 (FAAY…LGML).

It belongs to the UppP family.

Its subcellular location is the cell membrane. It catalyses the reaction di-trans,octa-cis-undecaprenyl diphosphate + H2O = di-trans,octa-cis-undecaprenyl phosphate + phosphate + H(+). Catalyzes the dephosphorylation of undecaprenyl diphosphate (UPP). Confers resistance to bacitracin. The protein is Undecaprenyl-diphosphatase of Corynebacterium glutamicum (strain R).